Consider the following 735-residue polypeptide: 1,4-alpha-glucan branching enzyme GlgB 1 (735 aa).

Aspartate 418 acts as the Nucleophile in catalysis. The Proton donor role is filled by glutamate 471.

Belongs to the glycosyl hydrolase 13 family. GlgB subfamily. In terms of assembly, monomer.

It catalyses the reaction Transfers a segment of a (1-&gt;4)-alpha-D-glucan chain to a primary hydroxy group in a similar glucan chain.. It participates in glycan biosynthesis; glycogen biosynthesis. In terms of biological role, catalyzes the formation of the alpha-1,6-glucosidic linkages in glycogen by scission of a 1,4-alpha-linked oligosaccharide from growing alpha-1,4-glucan chains and the subsequent attachment of the oligosaccharide to the alpha-1,6 position. The polypeptide is 1,4-alpha-glucan branching enzyme GlgB 1 (Rhizobium etli (strain ATCC 51251 / DSM 11541 / JCM 21823 / NBRC 15573 / CFN 42)).